The primary structure comprises 622 residues: Low affinity potassium transport system protein Kup (622 aa).

12 consecutive transmembrane segments (helical) span residues 9 to 29 (LPAITLAAIGVVYGDIGTSPL), 49 to 69 (VFGFLSLIFWLLIFVVSIKYL), 103 to 123 (VIMGLIGGSFFYGEVVITPAI), 137 to 157 (PQLDTWIVPLSIIVLTLLFMI), 165 to 185 (VGKLFAPIMLTWFLILAGLGL), 213 to 233 (VSFIALGAVVLSITGGEVLYA), 247 to 267 (WFTVVLPSLTLNYFGQGALLL), 276 to 296 (PFFLLAPDWALIPLLIIAALA), 337 to 357 (IYIPFVNWMLYVAVVIVIVSF), 363 to 383 (LAAAYGIAVTGTMVLTSILST), 396 to 416 (FVALILIAFLCVDIPLFTANL), and 419 to 439 (LLSGGWLPLSLGTVMFIVMTT).

This sequence belongs to the HAK/KUP transporter (TC 2.A.72) family.

Its subcellular location is the cell inner membrane. The enzyme catalyses K(+)(in) + H(+)(in) = K(+)(out) + H(+)(out). Functionally, responsible for the low-affinity transport of potassium into the cell. Likely operates as a K(+):H(+) symporter. This chain is Low affinity potassium transport system protein Kup, found in Shigella flexneri.